The chain runs to 96 residues: SAGA complex subunit SUS1 (96 aa).

Lysine 68 is covalently cross-linked (Glycyl lysine isopeptide (Lys-Gly) (interchain with G-Cter in ubiquitin)).

It belongs to the ENY2 family. As to quaternary structure, component of the 1.8 MDa SAGA (Spt-Ada-Gcn5 acetyltransferase) complex, which is composed of 19 subunits TRA1, SPT7, TAF5, NGG1/ADA3, SGF73, SPT20/ADA5, SPT8, TAF12, TAF6, HFI1/ADA1, UBP8, GCN5, ADA2, SPT3, SGF29, TAF10, TAF9, SGF11 and SUS1. The SAGA complex is composed of 4 modules, namely the HAT (histone acetyltransferase) module (GCN5, ADA2, NGG1/ADA3 and SGF29), the DUB (deubiquitinating) module (UBP8, SGF11, SGF73 and SUS1), the core or TAF (TBP-associated factor) module (TAF5, TAF6, TAF9, TAF10 and TAF12), and the Tra1 or SPT (Suppressor of Ty) module (TRA1, HFI1/ADA1, SPT3, SPT7, SPT8 and SPT20/ADA5). The Tra1/SPT module binds activators, the core module recruits TBP (TATA-binding protein), the HAT module contains the histone H3 acetyltransferase GCN5, and the DUB module comprises the histone H2B deubiquitinase UBP8. Also identified in an altered form of SAGA, named SALSA (SAGA altered, Spt8 absent) or SLIK (SAGA-like) complex, which contains a C-terminal truncated form of SPT7 and is missing SPT8. However, it has been shown that the SAGA and SAGA-like SALSA/SLIK transcriptional coactivators are structurally and biochemically equivalent. Component of the nuclear pore complex (NPC)-associated TREX-2 complex (transcription and export complex 2), composed of at least SUS1, SAC3, THP1, SEM1, and CDC31. TREX-2 contains 2 SUS1 chains. The TREX-2 complex interacts with the mRNA export factors MEX67, MTR2 and SUB2, and the nucleoporin NUP1. Interacts directly with THP1, SAC3. Interacts directly with SGF11 and UBP8. Interacts with YRA1, MEX67 and with the RNA polymerase II.

It is found in the nucleus. The protein localises to the nucleoplasm. Its subcellular location is the cytoplasm. The protein resides in the P-body. Functionally, involved in mRNA export coupled transcription activation by association with both the TREX-2 and the SAGA complexes. SAGA acts as a general cofactor required for essentially all RNA polymerase II transcription. At the promoters, SAGA is required for transcription pre-initiation complex (PIC) recruitment. It influences RNA polymerase II transcriptional activity through different activities such as TBP interaction (via core/TAF module) and promoter selectivity, interaction with transcription activators (via Tra1/SPT module), and chromatin modification through histone acetylation (via HAT module) and deubiquitination (via DUB module). SAGA preferentially acetylates histones H3 (to form H3K9ac, H3K14ac, H3K18ac and H3K23ac) and H2B and deubiquitinates histone H2B. SAGA interacts with DNA via upstream activating sequences (UASs). Also identified in a modified version of SAGA named SALSA or SLIK. The cleavage of SPT7 and the absence of the SPT8 subunit in SLIK neither drive any major conformational differences in its structure compared with SAGA, nor significantly affect HAT, DUB, or DNA-binding activities. Within the SAGA complex, participates in a subcomplex with SGF11, SGF73 and UBP8 required for deubiquitination of H2B and for the maintenance of steady-state H3 methylation levels. The TREX-2 complex functions in docking export-competent ribonucleoprotein particles (mRNPs) to the nuclear entrance of the nuclear pore complex (nuclear basket), by association with components of the nuclear mRNA export machinery (MEX67-MTR2 and SUB2) in the nucleoplasm and the nucleoporin NUP1 at the nuclear basket. TREX-2 participates in mRNA export and accurate chromatin positioning in the nucleus by tethering genes to the nuclear periphery. SUS1 also has a role in mRNP biogenesis and maintenance of genome integrity through preventing RNA-mediated genome instability. Has a role in response to DNA damage induced by methyl methane sulfonate (MMS) and replication arrest induced by hydroxyurea. May also be involved in cytoplasmic mRNA decay by interaction with components of P-bodies. The polypeptide is SAGA complex subunit SUS1 (Saccharomyces cerevisiae (strain ATCC 204508 / S288c) (Baker's yeast)).